The following is a 1314-amino-acid chain: MGAASGQRGQGPPSPLLLLWLSLLLLLLPPSPAPALDPGLQPGNFSADEIGAHLFAESYNSSAEQVIFQSTVASWAYDTNMTEENARLQEEAELIWQEFAEVWGKKAKELFDAIRQNFTDSKLRRVIETIRTLGPANLPLARRQQYNSLQNNMNRIYSTSKVCLPNKTATCWSLEPELTNILASSRSYAKLLFAWESWHDVVGIPLKPLYQDFTALSNEAYKQDGFSDTGAYWRSAYDSPSFEETLEHLYHQLEPLYLNLHAYVRRALHRRYGDKYINLRGPIPAHLLGDMWAQSWDNIYDMVVPFPNKPNLDVTNTMVQKGWNVTHMFRVAEEFFTSMGLSPMPPEFWAESMLEKPTDGREVVCHASAWDFFNRKDFRIKQCTRITMEQLSTVHHEMGHVQYYLQYKDLTVPLRRGANPGFHEAIGDVLALSVSTPAHLHKIGLLDRVANDLESDINYLLKMALEKIAFLPFGYLVDQWRWGVFSGHTPPSRYNFDWWYFRTKYQGICPPVVRNETHFDAGAKFHIPSGTPYIRYFVSFILQFQFHQALCKEAGHQGPLHQCDIYQSTQAGAKLQRVLQAGYSRPWQEVLKEMVGSDTLDAQALLEYFQPVIRWLQEQNQRNGEVLGWPEYQWRPPLPDNYPEGIDLVTDETEAERFVEEYDRTARVLWNEYAEANWQYNTNITLEASKILLQKNKKVANHTLKYGTLAKKFDVSNFQNYTIKRIIKKVQNMDRAVLPPKELEEYNQILMDMETTYSIANVCYLNGTCLHLEPDLTNVMATSRKYEELLWVWKSWRDKVGRAILPLFPKYVELSNKIAHLNGYADGGDSWRSSYESKSLEQDLEQLYQELQPLYLNLHAYVRRSLHRHYGSQHINLDGPIPAHLLGNMWAQTWSNIYDLVAPFPSAPNLDATEAMIKQGWTPRRIFKEADDFFTSLGLLPVSEEFWNKSMLEKPGDGREVVCHASAWDFYNGKDFRIKQCTSVNMEDLVIAHHEMGHIQYFMQYKDLPVTFREGANPGFHEAIGDVLALSVSTPKHLHSLNLLSSEGGGYEHDINFLMKMALDKIAFIPFSYLIDQWRWRVFDGSITKENYNQEWWSLRLKYQGLCPPVPRSQDDFDPGSKFHVPANVPYIRYFVSFIIQFQFHEALCRAAGHTGPLHKCDIYQSKEAGKLLADTMKMGYSKPWPEAMKLITGQPNMSASAMMNYFKPLTEWLVTENRRHGETLGWPEYNWTPNTARSEGPFPESGRVNFLGMYLEPQQARVGQWVLLFLGVSLLVATLGLTHRLFSIRQHGHSLHRPHRGPQFGSEVELRHS.

Positions 1–35 (MGAASGQRGQGPPSPLLLLWLSLLLLLLPPSPAPA) are cleaved as a signal peptide. The Extracellular segment spans residues 36 to 1265 (LDPGLQPGNF…LEPQQARVGQ (1230 aa)). 5 N-linked (GlcNAc...) asparagine glycosylation sites follow: N44, N60, N80, N117, and N166. 2 Peptidase M2 domains span residues 46 to 630 (SADE…LGWP) and 649 to 1228 (VTDE…LGWP). C163 and C171 are joined by a disulfide. Y237 provides a ligand contact to chloride. N324 is a glycosylation site (N-linked (GlcNAc...) asparagine). Residues C365 and C383 are joined by a disulfide bond. Residue H396 participates in Zn(2+) binding. E397 (proton acceptor 1) is an active-site residue. Zn(2+) contacts are provided by H400 and E424. N-linked (GlcNAc...) asparagine glycosylation occurs at N515. H526 functions as the Proton donor 1 in the catalytic mechanism. R535 contacts chloride. Cysteines 551 and 563 form a disulfide. N683, N701, N720, and N766 each carry an N-linked (GlcNAc...) asparagine glycan. Residues C763 and C769 are joined by a disulfide bond. Residues R797 and Y835 each contribute to the chloride site. N948 carries N-linked (GlcNAc...) asparagine glycosylation. An intrachain disulfide couples C963 to C981. A Zn(2+)-binding site is contributed by H994. E995 functions as the Proton acceptor 2 in the catalytic mechanism. 2 residues coordinate Zn(2+): H998 and E1022. Chloride is bound by residues W1096 and R1100. H1124 (proton donor 2) is an active-site residue. R1133 is a chloride binding site. C1149 and C1161 are disulfide-bonded. N1197 carries an N-linked (GlcNAc...) asparagine glycan. The segment at 1221–1262 (HGETLGWPEYNWTPNTARSEGPFPESGRVNFLGMYLEPQQAR) is juxtamembrane stalk. Residues 1266–1282 (WVLLFLGVSLLVATLGL) form a helical membrane-spanning segment. Residues 1283 to 1314 (THRLFSIRQHGHSLHRPHRGPQFGSEVELRHS) are Cytoplasmic-facing. The segment at 1293 to 1314 (GHSLHRPHRGPQFGSEVELRHS) is disordered. Residue S1307 is modified to Phosphoserine.

This sequence belongs to the peptidase M2 family. In terms of assembly, monomer and homodimer; homodimerizes following binding to an inhibitor. Interacts with calmodulin (CALM1, CALM2 or CALM3); interaction takes place in the cytoplasmic region and regulates phosphorylation and proteolytic cleavage. Requires Zn(2+) as cofactor. Chloride serves as cofactor. In terms of processing, produced following proteolytic cleavage by secretase enzymes that cleave the transmembrane form in the juxtamembrane stalk region upstream of the transmembrane region. Cleavage can take place at different sites of the juxtamembrane stalk region. Phosphorylated by CK2 on Ser-1307; which allows membrane retention. Phosphorylated on tyrosine residues on its extracellular part, promoting cleavage by secretase enzymes and formation of the soluble form (Angiotensin-converting enzyme, soluble form). In terms of tissue distribution, widely expressed with dominant expression in lung and kidney.

The protein resides in the cell membrane. Its subcellular location is the cytoplasm. The protein localises to the secreted. The enzyme catalyses Release of a C-terminal dipeptide, oligopeptide-|-Xaa-Yaa, when Xaa is not Pro, and Yaa is neither Asp nor Glu. Thus, conversion of angiotensin I to angiotensin II, with increase in vasoconstrictor activity, but no action on angiotensin II.. It catalyses the reaction angiotensin I + H2O = L-histidyl-L-leucine + angiotensin II. It carries out the reaction bradykinin + H2O = L-Phe-L-Arg + bradykinin(1-7). The catalysed reaction is substance P + H2O = substance P(1-9) + L-Leu-L-Met-NH2. The enzyme catalyses substance P + H2O = substance P(1-8) + Gly-L-Leu-L-Met-NH2. It catalyses the reaction substance P + H2O = L-Phe-L-Phe-Gly-L-Leu-L-Met-NH2 + substance P(1-6). It carries out the reaction neurotensin + H2O = neurotensin(1-11) + L-isoleucyl-L-leucine. The catalysed reaction is goralatide + H2O = N-acetyl-L-seryl-L-aspartate + L-lysyl-L-proline. The enzyme catalyses Met-enkephalin + H2O = L-phenylalanyl-L-methionine + L-tyrosylglycylglycine. It catalyses the reaction Leu-enkephalin + H2O = L-tyrosylglycylglycine + L-phenylalanyl-L-leucine. It carries out the reaction Met-enkephalin-Arg-Phe + H2O = L-arginyl-L-phenylalanine + Met-enkephalin. The dipeptidyl carboxypeptidase activity is strongly activated by chloride. The dipeptidyl carboxypeptidase activity is specifically inhibited by lisinopril, captopril and enalaprilat. Its activity is regulated as follows. Strongly inhibited by lisinopril and captopril. Dipeptidyl carboxypeptidase that removes dipeptides from the C-terminus of a variety of circulating hormones, such as angiotensin I, bradykinin or enkephalins, thereby playing a key role in the regulation of blood pressure, electrolyte homeostasis or synaptic plasticity. Composed of two similar catalytic domains, each possessing a functional active site, with different selectivity for substrates. Plays a major role in the angiotensin-renin system that regulates blood pressure and sodium retention by the kidney by converting angiotensin I to angiotensin II, resulting in an increase of the vasoconstrictor activity of angiotensin. Also able to inactivate bradykinin, a potent vasodilator, and therefore enhance the blood pressure response. Acts as a regulator of synaptic transmission by mediating cleavage of neuropeptide hormones, such as substance P, neurotensin or enkephalins. Catalyzes degradation of different enkephalin neuropeptides (Met-enkephalin, Leu-enkephalin, Met-enkephalin-Arg-Phe and possibly Met-enkephalin-Arg-Gly-Leu). Acts as a regulator of synaptic plasticity in the nucleus accumbens of the brain by mediating cleavage of Met-enkephalin-Arg-Phe, a strong ligand of Mu-type opioid receptor OPRM1, into Met-enkephalin. Met-enkephalin-Arg-Phe cleavage by ACE decreases activation of OPRM1, leading to long-term synaptic potentiation of glutamate release. Also acts as a regulator of hematopoietic stem cell differentiation by mediating degradation of hemoregulatory peptide N-acetyl-SDKP (AcSDKP). Acts as a regulator of cannabinoid signaling pathway by mediating degradation of hemopressin, an antagonist peptide of the cannabinoid receptor CNR1. Involved in amyloid-beta metabolism by catalyzing degradation of Amyloid-beta protein 40 and Amyloid-beta protein 42 peptides, thereby preventing plaque formation. Catalyzes cleavage of cholecystokinin (maturation of Cholecystokinin-8 and Cholecystokinin-5) and Gonadoliberin-1 (both maturation and degradation) hormones. Degradation of hemoregulatory peptide N-acetyl-SDKP (AcSDKP) and amyloid-beta proteins is mediated by the N-terminal catalytic domain, while angiotensin I and cholecystokinin cleavage is mediated by the C-terminal catalytic region. In terms of biological role, soluble form that is released in blood plasma and other body fluids following proteolytic cleavage in the juxtamembrane stalk region. Functionally, isoform produced by alternative promoter usage that is specifically expressed in spermatocytes and adult testis, and which is required for male fertility. In contrast to somatic isoforms, only contains one catalytic domain. Acts as a dipeptidyl carboxypeptidase that removes dipeptides from the C-terminus of substrates. The identity of substrates that are needed for male fertility is unknown. May also have a glycosidase activity which releases GPI-anchored proteins from the membrane by cleaving the mannose linkage in the GPI moiety. The GPIase activity was reported to be essential for the egg-binding ability of the sperm. This activity is however unclear and has been challenged by other groups, suggesting that it may be indirect. This chain is Angiotensin-converting enzyme, found in Mesocricetus auratus (Golden hamster).